The chain runs to 384 residues: Cyanate transport protein CynX (384 aa).

A run of 12 helical transmembrane segments spans residues 3-23 (LVLVLIGLNMRPLLTSVGPLL), 34-54 (FSVAALLTALPVVTMGGLALA), 68-88 (VAISLLLIAVGALMRELYPQS), 89-109 (ALLLSSALLGGVGIGIIQAVM), 122-142 (PLVMGLWSAALMGGGGLGAAI), 153-173 (WYQTLAWWALPAVVALFAWWW), 204-224 (YFGLINGGYASLIAWLPAFYI), 235-255 (SLLALMTLGQAAGALLMPAMA), 263-283 (LLMLALVLQLVGFCGFIWLPM), 287-307 (VLWAMVCGLGLGGAFPLCLLL), 322-342 (VAFMQGIGFIIAGLAPWFSGV), and 354-374 (WAFHALCVVGLMIITLRFAPV).

This sequence belongs to the major facilitator superfamily. Cyanate porter (TC 2.A.1.17) family.

It is found in the cell inner membrane. Its function is as follows. This protein is part of an active transport system that transports exogenous cyanate into E.coli cells. The polypeptide is Cyanate transport protein CynX (cynX) (Escherichia coli (strain K12)).